The primary structure comprises 370 residues: Phosphoserine aminotransferase (370 aa).

Position 38 (Arg38) interacts with L-glutamate. The pyridoxal 5'-phosphate site is built by Trp101, Thr143, Asp166, and Gln189. Lys190 is subject to N6-(pyridoxal phosphate)lysine. 243–244 (NT) contacts pyridoxal 5'-phosphate.

It belongs to the class-V pyridoxal-phosphate-dependent aminotransferase family. SerC subfamily. Homodimer. Pyridoxal 5'-phosphate is required as a cofactor.

It is found in the cytoplasm. The catalysed reaction is O-phospho-L-serine + 2-oxoglutarate = 3-phosphooxypyruvate + L-glutamate. It carries out the reaction 4-(phosphooxy)-L-threonine + 2-oxoglutarate = (R)-3-hydroxy-2-oxo-4-phosphooxybutanoate + L-glutamate. The protein operates within amino-acid biosynthesis; L-serine biosynthesis; L-serine from 3-phospho-D-glycerate: step 2/3. Its pathway is cofactor biosynthesis; pyridoxine 5'-phosphate biosynthesis; pyridoxine 5'-phosphate from D-erythrose 4-phosphate: step 3/5. In terms of biological role, catalyzes the reversible conversion of 3-phosphohydroxypyruvate to phosphoserine and of 3-hydroxy-2-oxo-4-phosphonooxybutanoate to phosphohydroxythreonine. This chain is Phosphoserine aminotransferase, found in Methanosarcina mazei (strain ATCC BAA-159 / DSM 3647 / Goe1 / Go1 / JCM 11833 / OCM 88) (Methanosarcina frisia).